The following is a 273-amino-acid chain: Large ribosomal subunit protein uL2 (273 aa).

The interval 221–263 is disordered; it reads RGTAMNPVDHPHGGGEGRNFGKHPVSPWGLQTKGKKTRKNKRT. Residues 253–263 are compositionally biased toward basic residues; sequence KGKKTRKNKRT.

This sequence belongs to the universal ribosomal protein uL2 family. Part of the 50S ribosomal subunit. Forms a bridge to the 30S subunit in the 70S ribosome.

Functionally, one of the primary rRNA binding proteins. Required for association of the 30S and 50S subunits to form the 70S ribosome, for tRNA binding and peptide bond formation. It has been suggested to have peptidyltransferase activity; this is somewhat controversial. Makes several contacts with the 16S rRNA in the 70S ribosome. The protein is Large ribosomal subunit protein uL2 of Buchnera aphidicola subsp. Baizongia pistaciae (strain Bp).